Reading from the N-terminus, the 368-residue chain is Seipin-1 (368 aa).

The next 3 helical transmembrane spans lie at 26-46 (WFMV…VVLS), 101-121 (VMVL…SLYV), and 292-312 (LCVW…LWCF). Residues 344–368 (MERRRRERRNQPRRRNFATTQKSYT) form a disordered region. A compositionally biased stretch (basic residues) spans 346–359 (RRRRERRNQPRRRN).

The protein belongs to the seipin family. Expressed in seeds and young seedlings. Not detected in leaves.

The protein resides in the endoplasmic reticulum membrane. Involved in lipid metabolism and lipid droplet (LD) morphology, number, and size. Facilitates the formation of large-sized LDs and modulates triacylglycerol accumulation. Induces probably a reorganization of the endoplasmic reticulum into LD-forming domains. The polypeptide is Seipin-1 (Arabidopsis thaliana (Mouse-ear cress)).